A 276-amino-acid polypeptide reads, in one-letter code: Phosphonoacetaldehyde hydrolase (276 aa).

Asp-19 serves as the catalytic Nucleophile. Mg(2+) contacts are provided by Asp-19 and Ala-21. Lys-60 serves as the catalytic Schiff-base intermediate with substrate. Residue Asp-193 participates in Mg(2+) binding.

It belongs to the HAD-like hydrolase superfamily. PhnX family. In terms of assembly, homodimer. Mg(2+) is required as a cofactor.

It carries out the reaction phosphonoacetaldehyde + H2O = acetaldehyde + phosphate + H(+). In terms of biological role, involved in phosphonate degradation. In Bordetella bronchiseptica (strain ATCC BAA-588 / NCTC 13252 / RB50) (Alcaligenes bronchisepticus), this protein is Phosphonoacetaldehyde hydrolase.